Reading from the N-terminus, the 484-residue chain is UDP-N-acetylmuramate--L-alanine ligase (484 aa).

126–132 lines the ATP pocket; it reads GTHGKTT.

It belongs to the MurCDEF family.

The protein resides in the cytoplasm. It catalyses the reaction UDP-N-acetyl-alpha-D-muramate + L-alanine + ATP = UDP-N-acetyl-alpha-D-muramoyl-L-alanine + ADP + phosphate + H(+). Its pathway is cell wall biogenesis; peptidoglycan biosynthesis. Cell wall formation. The polypeptide is UDP-N-acetylmuramate--L-alanine ligase (Tolumonas auensis (strain DSM 9187 / NBRC 110442 / TA 4)).